The following is a 149-amino-acid chain: Large ribosomal subunit protein uL13 (149 aa).

This sequence belongs to the universal ribosomal protein uL13 family. As to quaternary structure, part of the 50S ribosomal subunit.

In terms of biological role, this protein is one of the early assembly proteins of the 50S ribosomal subunit, although it is not seen to bind rRNA by itself. It is important during the early stages of 50S assembly. The protein is Large ribosomal subunit protein uL13 of Bifidobacterium longum subsp. infantis (strain ATCC 15697 / DSM 20088 / JCM 1222 / NCTC 11817 / S12).